The chain runs to 192 residues: Pyridoxal 5'-phosphate synthase subunit PdxT (192 aa).

47–49 is an L-glutamine binding site; the sequence is GES. C79 functions as the Nucleophile in the catalytic mechanism. L-glutamine-binding positions include R106 and 134–135; that span reads IR. Residues H170 and E172 each act as charge relay system in the active site.

This sequence belongs to the glutaminase PdxT/SNO family. In terms of assembly, in the presence of PdxS, forms a dodecamer of heterodimers. Only shows activity in the heterodimer.

It catalyses the reaction aldehydo-D-ribose 5-phosphate + D-glyceraldehyde 3-phosphate + L-glutamine = pyridoxal 5'-phosphate + L-glutamate + phosphate + 3 H2O + H(+). The enzyme catalyses L-glutamine + H2O = L-glutamate + NH4(+). It functions in the pathway cofactor biosynthesis; pyridoxal 5'-phosphate biosynthesis. In terms of biological role, catalyzes the hydrolysis of glutamine to glutamate and ammonia as part of the biosynthesis of pyridoxal 5'-phosphate. The resulting ammonia molecule is channeled to the active site of PdxS. This chain is Pyridoxal 5'-phosphate synthase subunit PdxT, found in Geobacillus sp. (strain WCH70).